Here is a 309-residue protein sequence, read N- to C-terminus: Methionyl-tRNA formyltransferase (309 aa).

109 to 112 contributes to the (6S)-5,6,7,8-tetrahydrofolate binding site; sequence SLLP.

The protein belongs to the Fmt family.

It carries out the reaction L-methionyl-tRNA(fMet) + (6R)-10-formyltetrahydrofolate = N-formyl-L-methionyl-tRNA(fMet) + (6S)-5,6,7,8-tetrahydrofolate + H(+). Its function is as follows. Attaches a formyl group to the free amino group of methionyl-tRNA(fMet). The formyl group appears to play a dual role in the initiator identity of N-formylmethionyl-tRNA by promoting its recognition by IF2 and preventing the misappropriation of this tRNA by the elongation apparatus. The polypeptide is Methionyl-tRNA formyltransferase (Clostridioides difficile (strain 630) (Peptoclostridium difficile)).